The primary structure comprises 205 residues: Glycerol-3-phosphate acyltransferase (205 aa).

Residues 1–3 (MSA) are Periplasmic-facing. The helical transmembrane segment at 4-24 (IAPGMILIAYLCGSISSAILV) threads the bilayer. The Cytoplasmic segment spans residues 25-52 (CRLCGLPDPRTSGSGNPGATNVLRIGGK). A helical transmembrane segment spans residues 53–73 (GAAVAVLIFDVLKGMLPVWGA). The Periplasmic segment spans residues 74–80 (YELGVSP). The chain crosses the membrane as a helical span at residues 81–101 (FWLGLIAIAACLGHIWPVFFG). Residues 102-111 (FKGGKGVATA) are Cytoplasmic-facing. Residues 112–132 (FGAIAPISWDLTGVMAGTWLL) form a helical membrane-spanning segment. Residues 133–137 (TVLLS) lie on the Periplasmic side of the membrane. Residues 138–158 (GYSSLGAIVSALIAPFYVWWF) form a helical membrane-spanning segment. Topologically, residues 159-205 (KPQFTFPVSMLSCLILLRHHDNIQRLWRRQETKIWTKFKRKREKDPE) are cytoplasmic.

It belongs to the PlsY family. In terms of assembly, probably interacts with PlsX.

Its subcellular location is the cell inner membrane. It catalyses the reaction sn-glycerol 3-phosphate + an acyl-CoA = a 1-acyl-sn-glycero-3-phosphate + CoA. The enzyme catalyses a fatty acyl-[ACP] + sn-glycerol 3-phosphate = a 1-acyl-sn-glycero-3-phosphate + holo-[ACP]. Its pathway is lipid metabolism; phospholipid metabolism. In terms of biological role, catalyzes the transfer of an acyl group from acyl-ACP to glycerol-3-phosphate (G3P) to form lysophosphatidic acid (LPA). This enzyme can also utilize acyl-CoA as fatty acyl donor, but not acyl-PO(4). The sequence is that of Glycerol-3-phosphate acyltransferase from Shigella flexneri serotype 5b (strain 8401).